The primary structure comprises 417 residues: Serpin A3-7 (417 aa).

The signal sequence occupies residues 1–25 (MRTERTSFLLALGLLVSGFCSRVHC). N103, N183, N221, and N267 each carry an N-linked (GlcNAc...) asparagine glycan.

This sequence belongs to the serpin family. Homodimer.

The protein localises to the cytoplasmic vesicle. It is found in the secretory vesicle. Its subcellular location is the chromaffin granule. The protein resides in the secreted. In terms of biological role, serine protease inhibitor. This is Serpin A3-7 from Bos taurus (Bovine).